A 67-amino-acid polypeptide reads, in one-letter code: Small ribosomal subunit protein eS31 (67 aa).

Residues Cys31, Cys34, Cys49, and Cys52 each contribute to the Zn(2+) site. A C4-type zinc finger spans residues 31 to 52 (CPKCGAGVFMAEHLNRFACGKC).

Belongs to the eukaryotic ribosomal protein eS31 family. Part of the 30S ribosomal subunit. Zn(2+) serves as cofactor.

The sequence is that of Small ribosomal subunit protein eS31 from Methanococcus maripaludis (strain DSM 14266 / JCM 13030 / NBRC 101832 / S2 / LL).